The primary structure comprises 482 residues: Zinc finger protein 223 (482 aa).

Residues 8–78 (VTFKDVAVVF…DIATQREGNS (71 aa)) enclose the KRAB domain. 5 C2H2-type zinc fingers span residues 176–198 (HSCD…QRVH), 204–226 (FKCD…QRVH), 232–254 (FKCE…CKLH), 260–282 (YNCE…QRIH), and 288–310 (FKCE…CVVH). The segment at 316–338 (NSTGEYGKGFIRRLDLCKHQTIH) adopts a C2H2-type 6; degenerate zinc-finger fold. C2H2-type zinc fingers lie at residues 344-366 (YNCK…QRVH), 372-394 (YKCD…HRAH), and 400-422 (YNCD…KRLH). The C2H2-type 10; degenerate zinc-finger motif lies at 428–450 (FKCEDCGKKLVYRSYRKDQQKNH).

It belongs to the krueppel C2H2-type zinc-finger protein family.

The protein resides in the nucleus. In terms of biological role, may be involved in transcriptional regulation. The protein is Zinc finger protein 223 (ZNF223) of Homo sapiens (Human).